Here is a 156-residue protein sequence, read N- to C-terminus: Ribosomal RNA large subunit methyltransferase H (156 aa).

S-adenosyl-L-methionine contacts are provided by residues Leu73, Gly104, and 123 to 128 (IGPLTL).

Belongs to the RNA methyltransferase RlmH family. Homodimer.

Its subcellular location is the cytoplasm. The enzyme catalyses pseudouridine(1915) in 23S rRNA + S-adenosyl-L-methionine = N(3)-methylpseudouridine(1915) in 23S rRNA + S-adenosyl-L-homocysteine + H(+). In terms of biological role, specifically methylates the pseudouridine at position 1915 (m3Psi1915) in 23S rRNA. The protein is Ribosomal RNA large subunit methyltransferase H of Stenotrophomonas maltophilia (strain K279a).